A 117-amino-acid polypeptide reads, in one-letter code: Large ribosomal subunit protein uL23 (117 aa).

It belongs to the universal ribosomal protein uL23 family. In terms of assembly, part of the 50S ribosomal subunit. Contacts protein L29, and trigger factor when it is bound to the ribosome.

Functionally, one of the early assembly proteins it binds 23S rRNA. One of the proteins that surrounds the polypeptide exit tunnel on the outside of the ribosome. Forms the main docking site for trigger factor binding to the ribosome. This chain is Large ribosomal subunit protein uL23, found in Ruminiclostridium cellulolyticum (strain ATCC 35319 / DSM 5812 / JCM 6584 / H10) (Clostridium cellulolyticum).